Reading from the N-terminus, the 607-residue chain is Cytosolic Fe-S cluster assembly factor NAR1 (607 aa).

The [4Fe-4S] cluster site is built by cysteine 20, cysteine 82, cysteine 85, cysteine 88, cysteine 204, and cysteine 259. The segment at 430–476 (KPNTGKSTNTTTTTTKSKVNPLAARRRARIANNRGKPETKSTSEVNS) is disordered. The segment covering 432–447 (NTGKSTNTTTTTTKSK) has biased composition (low complexity). Positions 496 and 500 each coordinate [4Fe-4S] cluster.

Belongs to the NARF family.

Component of the cytosolic Fe/S protein assembly machinery. Required for maturation of extramitochondrial Fe/S proteins. May play a role in the transfer of pre-assembled Fe/S clusters to target apoproteins. This chain is Cytosolic Fe-S cluster assembly factor NAR1 (NAR1), found in Candida albicans (strain SC5314 / ATCC MYA-2876) (Yeast).